We begin with the raw amino-acid sequence, 953 residues long: Lysosomal alpha-glucosidase (953 aa).

A signal peptide spans 1 to 27 (MNIRKPLCSNSVVGACTLVSLTTAVIL). Positions 28–69 (GHLMLRELMLLPQDLHESSSGLWKTYRPHHQESYEPAPLHIQ) are excised as a propeptide. The P-type domain occupies 80 to 131 (TQCDVTPNSRFDCAPDKGITQEQCEARGCCWVPAGQVLNGPVMGQPWCFFPP). Cystine bridges form between C82-C109, C92-C108, and C103-C127. N-linked (GlcNAc...) asparagine glycosylation is found at N140, N233, and N390. D404 contributes to the substrate binding site. N470 carries N-linked (GlcNAc...) asparagine glycosylation. D518 serves as the catalytic Nucleophile. Residue E521 is part of the active site. Cysteines 533 and 558 form a disulfide. The substrate site is built by R600 and D616. C647 and C658 are disulfide-bonded. An N-linked (GlcNAc...) asparagine glycan is attached at N652. H674 is a substrate binding site. 2 N-linked (GlcNAc...) asparagine glycosylation sites follow: N883 and N926.

The protein belongs to the glycosyl hydrolase 31 family.

The protein localises to the lysosome. It localises to the lysosome membrane. It carries out the reaction Hydrolysis of terminal, non-reducing (1-&gt;4)-linked alpha-D-glucose residues with release of alpha-D-glucose.. Functionally, essential for the degradation of glycogen in lysosomes. Has highest activity on alpha-1,4-linked glycosidic linkages, but can also hydrolyze alpha-1,6-linked glucans. This is Lysosomal alpha-glucosidase (Gaa) from Rattus norvegicus (Rat).